The chain runs to 430 residues: MAVLARQLQRLLWTACKKKEREKEGREEEEEEEAGRRAPEGPRSLLTAPRRAQRPHGGAEASGGLRFGASAAQGWRARMEDAHCTWLSLPGLPPGWALFAVLDGHGGARAARFGARHLPGHVLQELGPEPSEPEGVREALRRAFLSADERLRSLWPRVETGGCTAVVLLVSPRFLYLAHCGDSRAVLSRAGAVAFSTEDHRPLRPRERERIHAAGGTIRRRRVEGSLAVSRALGDFTYKEAPGRPPELQLVSAEPEVAALARQAEDEFMLLASDGVWDTVSGAALAGLVASRLRLGLAPELLCAQLLDTCLCKGSLDNMTCILVCFPGAPRPSEEAIRRELALDAALGCRIAELCASAQKPPSLNTVFRTLASEDIPDLPPGGGLDCKATVIAEVYSQICQVSEECGEKGQDGAGKSNPTHLGSALDMEA.

Positions 16–65 are disordered; that stretch reads CKKKEREKEGREEEEEEEAGRRAPEGPRSLLTAPRRAQRPHGGAEASGGL. The span at 17 to 26 shows a compositional bias: basic and acidic residues; it reads KKKEREKEGR. One can recognise a PPM-type phosphatase domain in the interval 66 to 326; the sequence is RFGASAAQGW…DNMTCILVCF (261 aa). Mn(2+)-binding residues include aspartate 103, glycine 104, aspartate 274, and aspartate 317. The disordered stretch occupies residues 407–430; it reads GEKGQDGAGKSNPTHLGSALDMEA.

Belongs to the PP2C family. Requires Mg(2+) as cofactor. The cofactor is Mn(2+).

It catalyses the reaction O-phospho-L-seryl-[protein] + H2O = L-seryl-[protein] + phosphate. The catalysed reaction is O-phospho-L-threonyl-[protein] + H2O = L-threonyl-[protein] + phosphate. The protein is Probable protein phosphatase 1N (PPM1N) of Homo sapiens (Human).